A 485-amino-acid chain; its full sequence is Cholesterol 16,22-dihydroxylase CYP90G4 (485 aa).

Residues valine 4 to leucine 24 traverse the membrane as a helical segment. Cysteine 432 is a heme binding site.

Belongs to the cytochrome P450 family. As to expression, mainly expressed in leaves and, at low levels, in roots and stems.

The protein resides in the membrane. It catalyses the reaction cholesterol + 2 reduced [NADPH--hemoprotein reductase] + 2 O2 = (16S,22S)-dihydroxycholesterol + 2 oxidized [NADPH--hemoprotein reductase] + 2 H2O + 2 H(+). The protein operates within steroid metabolism; cholesterol metabolism. Functionally, involved in the biosynthesis of spiroketal steroid and saponin natural products from cholesterol such as diosgenin and analogs (e.g. furostanol and spirostanol), plant defense compounds used as main precursors for the industrial production of steroid hormones. During the 5,6-spiroketalization of cholesterol, catalyzes the hydroxylation of cholesterol to form 16S,22S-dihydroxycholesterol and, possibly, the subsequent conversion of 16S,22S-dihydroxycholesterol into 16-oxo-22-hydroxy-cholesterol and 16-hydroxy-22-oxo-cholesterol. 16-hydroxy-22-oxo-cholesterol submit a spontaneous reaction leading to the production of furostanol-type steroid diastereomers, precursors of diosgenin. The sequence is that of Cholesterol 16,22-dihydroxylase CYP90G4 from Paris polyphylla (Daiswa polyphylla).